Consider the following 312-residue polypeptide: Olfactory receptor 4F3/4F16/4F29 (312 aa).

The Extracellular portion of the chain corresponds to 1 to 25 (MDGENHSVVSEFLFLGLTHSWEIQL). An N-linked (GlcNAc...) asparagine glycan is attached at Asn5. Residues 26–49 (LLLVFSSVLYVASITGNILIVFSV) form a helical membrane-spanning segment. Topologically, residues 50-57 (TTDPHLHS) are cytoplasmic. A helical transmembrane segment spans residues 58 to 79 (PMYFLLASLSFIDLGACSVTSP). Residues 80–100 (KMIYDLFRKRKVISFGGCIAQ) are Extracellular-facing. Cys97 and Cys189 are joined by a disulfide. Residues 101-120 (IFFIHVVGGVEMVLLIAMAF) traverse the membrane as a helical segment. The Cytoplasmic portion of the chain corresponds to 121–139 (DRYVALCKPLHYLTIMSPR). The helical transmembrane segment at 140–158 (MCLSFLAVAWTLGVSHSLF) threads the bilayer. The Extracellular segment spans residues 159–195 (QLAFLVNLAFCGPNVLDSFYCDLPRLLRLACTDTYRL). Residues 196–219 (QFMVTVNSGFICVGTFFILLISYV) traverse the membrane as a helical segment. Topologically, residues 220–235 (FILFTVWKHSSGGSSK) are cytoplasmic. A helical membrane pass occupies residues 236–258 (ALSTLSAHSTVVLLFFGPPMFVY). The Extracellular portion of the chain corresponds to 259 to 269 (TRPHPNSQMDK). Residues 270-289 (FLAIFDAVLTPFLNPVVYTF) form a helical membrane-spanning segment. The Cytoplasmic portion of the chain corresponds to 290 to 312 (RNKEMKAAIKRVCKQLVIYKRIS).

This sequence belongs to the G-protein coupled receptor 1 family.

The protein resides in the cell membrane. Odorant receptor. In Homo sapiens (Human), this protein is Olfactory receptor 4F3/4F16/4F29 (OR4F3).